The following is a 121-amino-acid chain: Putative iron-sulfur cluster insertion protein ErpA (121 aa).

Residues cysteine 49, cysteine 113, and cysteine 115 each contribute to the iron-sulfur cluster site.

Belongs to the HesB/IscA family. In terms of assembly, homodimer. Iron-sulfur cluster serves as cofactor.

Functionally, required for insertion of 4Fe-4S clusters. This is Putative iron-sulfur cluster insertion protein ErpA from Paraburkholderia phymatum (strain DSM 17167 / CIP 108236 / LMG 21445 / STM815) (Burkholderia phymatum).